The following is a 588-amino-acid chain: Methylcrotonoyl-CoA carboxylase beta chain, mitochondrial (588 aa).

A CoA carboxyltransferase N-terminal domain is found at 72–329 (MNSTLKQLKE…KKQPSPVITE (258 aa)). Positions 72–570 (MNSTLKQLKE…RKVIALSLSA (499 aa)) are carboxyltransferase. In terms of domain architecture, CoA carboxyltransferase C-terminal spans 329 to 570 (ETEEPLYPTS…RKVIALSLSA (242 aa)). An acyl-CoA binding region spans residues 366-395 (RFDEFKELYGTTLICGFARVHGMPVGIIAN).

The protein belongs to the AccD/PCCB family. In terms of assembly, probably a dodecamer composed of six biotin-containing alpha subunits and six beta subunits.

Its subcellular location is the mitochondrion matrix. The catalysed reaction is 3-methylbut-2-enoyl-CoA + hydrogencarbonate + ATP = 3-methyl-(2E)-glutaconyl-CoA + ADP + phosphate + H(+). It functions in the pathway amino-acid degradation; L-leucine degradation; (S)-3-hydroxy-3-methylglutaryl-CoA from 3-isovaleryl-CoA: step 2/3. In terms of biological role, carboxyltransferase subunit of the 3-methylcrotonyl-CoA carboxylase, an enzyme that catalyzes the conversion of 3-methylcrotonyl-CoA to 3-methylglutaconyl-CoA, a critical step for leucine and isovaleric acid catabolism. This Dictyostelium discoideum (Social amoeba) protein is Methylcrotonoyl-CoA carboxylase beta chain, mitochondrial (mccb).